A 156-amino-acid chain; its full sequence is Small ribosomal subunit protein uS7c (156 aa).

This sequence belongs to the universal ribosomal protein uS7 family. As to quaternary structure, part of the 30S ribosomal subunit.

It localises to the plastid. It is found in the chloroplast. In terms of biological role, one of the primary rRNA binding proteins, it binds directly to 16S rRNA where it nucleates assembly of the head domain of the 30S subunit. The chain is Small ribosomal subunit protein uS7c (rps7) from Bowenia serrulata (Byfield fern).